The sequence spans 223 residues: Ribose-5-phosphate isomerase A (223 aa).

Substrate contacts are provided by residues 29–32 (TGST), 82–85 (DGAD), and 95–98 (KGGG). Catalysis depends on Glu104, which acts as the Proton acceptor. Position 122 (Lys122) interacts with substrate.

Belongs to the ribose 5-phosphate isomerase family. As to quaternary structure, homodimer.

The catalysed reaction is aldehydo-D-ribose 5-phosphate = D-ribulose 5-phosphate. Its pathway is carbohydrate degradation; pentose phosphate pathway; D-ribose 5-phosphate from D-ribulose 5-phosphate (non-oxidative stage): step 1/1. Functionally, catalyzes the reversible conversion of ribose-5-phosphate to ribulose 5-phosphate. In Neisseria meningitidis serogroup B (strain ATCC BAA-335 / MC58), this protein is Ribose-5-phosphate isomerase A.